Here is a 487-residue protein sequence, read N- to C-terminus: GTPase Der (487 aa).

2 consecutive EngA-type G domains span residues 3–166 (PVVA…AEAM) and 199–372 (IKLA…DSAT). GTP-binding positions include 9–16 (GRPNVGKS), 56–60 (DTGGI), 118–121 (NKID), 205–212 (GKPNVGKS), 252–256 (DTAGV), and 317–320 (NKWD). Residues 373–457 (RRVSTSMLTR…PIQLRFQEGD (85 aa)) enclose the KH-like domain.

The protein belongs to the TRAFAC class TrmE-Era-EngA-EngB-Septin-like GTPase superfamily. EngA (Der) GTPase family. Associates with the 50S ribosomal subunit.

GTPase that plays an essential role in the late steps of ribosome biogenesis. The protein is GTPase Der of Shewanella oneidensis (strain ATCC 700550 / JCM 31522 / CIP 106686 / LMG 19005 / NCIMB 14063 / MR-1).